A 356-amino-acid chain; its full sequence is Heparan sulfate 2-O-sulfotransferase 1 (356 aa).

Topologically, residues 1-11 (MGLLRIMMPPK) are cytoplasmic. The helical; Signal-anchor for type II membrane protein transmembrane segment at 12 to 28 (LQLLAVVAFAVAMLFLE) threads the bilayer. Positions 24–51 (MLFLENQIQKLEESRAKLERAIARHEVR) form a coiled coil. The Lumenal segment spans residues 29-356 (NQIQKLEESR…FYEKIYPKSN (328 aa)). 6 residues coordinate adenosine 3',5'-bisphosphate: Lys83, Thr84, Ala85, Ser86, Thr87, and Ser88. N-linked (GlcNAc...) asparagine glycosylation is found at Asn108 and Asn127. Residues His140 and His142 contribute to the active site. Adenosine 3',5'-bisphosphate-binding residues include Arg164 and Ser172. 2 disulfides stabilise this stretch: Cys201–Cys209 and Cys222–Cys228. Adenosine 3',5'-bisphosphate is bound by residues Tyr279, Ser285, Thr290, and Lys293.

This sequence belongs to the sulfotransferase 3 family. In terms of assembly, homotrimer. Interacts with the C5-epimerase GLCE. N-glycosylated.

The protein resides in the golgi apparatus membrane. Its function is as follows. Catalyzes the transfer of a sulfo group from 3'-phospho-5'-adenylyl sulfate (PAPS) to the 2-OH position of iduronic acid (IdoA) or glucuronic acid (GlcA) within the heparan sulfate (HS) chain and participates in HS biosynthesis. Required for metanephric development of kidney formation, suggesting that 2-O-sulfation within HS is essential for signaling between ureteric bud and metanephric mesenchyme. The protein is Heparan sulfate 2-O-sulfotransferase 1 of Cricetulus griseus (Chinese hamster).